A 403-amino-acid polypeptide reads, in one-letter code: Na(+)-translocating NADH-quinone reductase subunit B (403 aa).

9 consecutive transmembrane segments (helical) span residues 56–76 (MMII…YNVG), 121–141 (AYFL…EVLF), 164–184 (LPPS…VVLG), 225–245 (GFAG…NILG), 260–280 (GSMG…LLLT), 287–307 (IVAG…AIGS), 312–332 (MFAM…GMIF), 348–368 (WLFG…NPAF), and 371–391 (GMML…HFVV). Threonine 230 carries the post-translational modification FMN phosphoryl threonine.

This sequence belongs to the NqrB/RnfD family. In terms of assembly, composed of six subunits; NqrA, NqrB, NqrC, NqrD, NqrE and NqrF. Requires FMN as cofactor.

It localises to the cell inner membrane. It catalyses the reaction a ubiquinone + n Na(+)(in) + NADH + H(+) = a ubiquinol + n Na(+)(out) + NAD(+). NQR complex catalyzes the reduction of ubiquinone-1 to ubiquinol by two successive reactions, coupled with the transport of Na(+) ions from the cytoplasm to the periplasm. NqrA to NqrE are probably involved in the second step, the conversion of ubisemiquinone to ubiquinol. The protein is Na(+)-translocating NADH-quinone reductase subunit B of Pseudomonas paraeruginosa (strain DSM 24068 / PA7) (Pseudomonas aeruginosa (strain PA7)).